Here is a 337-residue protein sequence, read N- to C-terminus: tRNA N6-adenosine threonylcarbamoyltransferase (337 aa).

Fe cation-binding residues include histidine 111 and histidine 115. Residues 134-138 (LVSGG), aspartate 167, glycine 180, and asparagine 272 each bind substrate. Aspartate 300 lines the Fe cation pocket.

The protein belongs to the KAE1 / TsaD family. Fe(2+) serves as cofactor.

The protein localises to the cytoplasm. It catalyses the reaction L-threonylcarbamoyladenylate + adenosine(37) in tRNA = N(6)-L-threonylcarbamoyladenosine(37) in tRNA + AMP + H(+). Required for the formation of a threonylcarbamoyl group on adenosine at position 37 (t(6)A37) in tRNAs that read codons beginning with adenine. Is involved in the transfer of the threonylcarbamoyl moiety of threonylcarbamoyl-AMP (TC-AMP) to the N6 group of A37, together with TsaE and TsaB. TsaD likely plays a direct catalytic role in this reaction. This Citrobacter koseri (strain ATCC BAA-895 / CDC 4225-83 / SGSC4696) protein is tRNA N6-adenosine threonylcarbamoyltransferase.